We begin with the raw amino-acid sequence, 249 residues long: Salivary antigen-5 (249 aa).

The first 26 residues, 1 to 26, serve as a signal peptide directing secretion; it reads MAKTQCPLVFSLLALALIGTLQSSAA. The SCP domain maps to 50 to 193; sequence SIHNYYRNLT…WYAGYLVCNY (144 aa). Residues asparagine 57, asparagine 127, and asparagine 168 are each glycosylated (N-linked (GlcNAc...) asparagine).

It belongs to the CRISP family. Venom allergen 5-like subfamily. In terms of assembly, monomeric in solution. Cu(2+) is required as a cofactor. As to expression, saliva (at protein level). Salivary gland (at protein level).

Its subcellular location is the secreted. Antioxidant protein that scavenges superoxide radicals. Removes superoxide radicals produced by PMA-stimulated host neutrophils. Inhibits host platelet aggregation induced by low doses of collagen by interfering with the pro-aggregatory properties of reactive oxygen species on platelets. Binds to heparin and sulfated glycosaminoglycans. This Dipetalogaster maximus (Blood-sucking bug) protein is Salivary antigen-5.